Here is a 259-residue protein sequence, read N- to C-terminus: MGNQQVVSITGAGSGIGLELVRSFKSAGYYVSALVRNEEQEALLCKEFKDALEIVVGDVRDHATNEKLIKQTIDRFGHLDCFIANAGIWDYMLSIEEPWEKISSSFDEIFDINVKSYFSGISAALPELKKTNGSVVMTASVSSHAVGGGGSCYIASKHAVLGMVKALAYELAPEVRVNAVSPGGTVTSLCGPASAGFDKMHMKDMPGIDDMIKGLTPLGFAAKPEDVVAPYLLLASRKQGKFITGTVISIDGGMALGRK.

NAD(+) is bound at residue 8 to 32; that stretch reads SITGAGSGIGLELVRSFKSAGYYVS. Substrate is bound at residue Ser140. The Proton acceptor role is filled by Tyr153.

It belongs to the short-chain dehydrogenases/reductases (SDR) family.

It carries out the reaction (1R,2S)-1,2-dihydronaphthalene-1,2-diol + NAD(+) = naphthalene-1,2-diol + NADH + H(+). The enzyme catalyses cis-1,2-dihydroxy-1,2-dihydrodibenzothiophene + NAD(+) = 1,2-dihydroxydibenzothiophene + NADH + H(+). It participates in aromatic compound metabolism; naphthalene degradation. Its function is as follows. Catalyzes the oxidation of naphthalene dihydrodiol into 1,2-dihydroxynaphthalene. This chain is 1,2-dihydroxy-1,2-dihydronaphthalene dehydrogenase (doxE), found in Pseudomonas sp. (strain C18).